We begin with the raw amino-acid sequence, 134 residues long: uncharacterized protein (134 aa).

The signal sequence occupies residues 1–37; it reads MSYIKRDHTALRDIAMKTFLKVVGLAASLSAASVAFS.

This is an uncharacterized protein from Coxiella burnetii (strain RSA 493 / Nine Mile phase I).